The chain runs to 419 residues: Serine hydroxymethyltransferase (419 aa).

(6S)-5,6,7,8-tetrahydrofolate-binding positions include Leu121 and 125–127 (GHL). Lys230 bears the N6-(pyridoxal phosphate)lysine mark. 355-357 (SPF) serves as a coordination point for (6S)-5,6,7,8-tetrahydrofolate.

The protein belongs to the SHMT family. Homodimer. Pyridoxal 5'-phosphate is required as a cofactor.

Its subcellular location is the cytoplasm. It carries out the reaction (6R)-5,10-methylene-5,6,7,8-tetrahydrofolate + glycine + H2O = (6S)-5,6,7,8-tetrahydrofolate + L-serine. It functions in the pathway one-carbon metabolism; tetrahydrofolate interconversion. The protein operates within amino-acid biosynthesis; glycine biosynthesis; glycine from L-serine: step 1/1. Catalyzes the reversible interconversion of serine and glycine with tetrahydrofolate (THF) serving as the one-carbon carrier. This reaction serves as the major source of one-carbon groups required for the biosynthesis of purines, thymidylate, methionine, and other important biomolecules. Also exhibits THF-independent aldolase activity toward beta-hydroxyamino acids, producing glycine and aldehydes, via a retro-aldol mechanism. The protein is Serine hydroxymethyltransferase of Streptococcus equi subsp. zooepidemicus (strain H70).